The sequence spans 249 residues: Triosephosphate isomerase (249 aa).

Residue 8–10 (NWK) coordinates substrate. His-95 (electrophile) is an active-site residue. Glu-163 (proton acceptor) is an active-site residue. Substrate contacts are provided by Gly-169 and Ser-209.

This sequence belongs to the triosephosphate isomerase family. In terms of assembly, homodimer.

Its subcellular location is the cytoplasm. The catalysed reaction is D-glyceraldehyde 3-phosphate = dihydroxyacetone phosphate. The protein operates within carbohydrate biosynthesis; gluconeogenesis. It functions in the pathway carbohydrate degradation; glycolysis; D-glyceraldehyde 3-phosphate from glycerone phosphate: step 1/1. In terms of biological role, involved in the gluconeogenesis. Catalyzes stereospecifically the conversion of dihydroxyacetone phosphate (DHAP) to D-glyceraldehyde-3-phosphate (G3P). This Orientia tsutsugamushi (strain Boryong) (Rickettsia tsutsugamushi) protein is Triosephosphate isomerase.